The following is an 81-amino-acid chain: Small ribosomal subunit protein uS17 (81 aa).

Belongs to the universal ribosomal protein uS17 family. As to quaternary structure, part of the 30S ribosomal subunit.

Functionally, one of the primary rRNA binding proteins, it binds specifically to the 5'-end of 16S ribosomal RNA. The polypeptide is Small ribosomal subunit protein uS17 (Methylocella silvestris (strain DSM 15510 / CIP 108128 / LMG 27833 / NCIMB 13906 / BL2)).